We begin with the raw amino-acid sequence, 309 residues long: UDP-URONIC ACID TRANSPORTER 1 (309 aa).

The next 10 helical transmembrane spans lie at Thr9 to Leu29, Ile43 to Phe63, Phe78 to Ser98, Val104 to Leu124, Ala131 to Gly151, Glu152 to Phe172, Leu193 to Glu213, Trp231 to Val251, Ser256 to Ile278, and Val283 to Gly302.

This sequence belongs to the TPT transporter family. TPT (TC 2.A.7.9) subfamily. Ubiquitous.

It is found in the golgi apparatus membrane. In terms of biological role, UDP-glucuronic acid transporter that modulates the polysaccharide composition of seed mucilage. Transports UDP-glucuronic acid (UDP-GlcA) and UDP-galacturonic acid (UDP-GalA) in vitro. The polypeptide is UDP-URONIC ACID TRANSPORTER 1 (Arabidopsis thaliana (Mouse-ear cress)).